Reading from the N-terminus, the 387-residue chain is Phosphoglycerate kinase (387 aa).

Residues 21–23, arginine 36, 59–62, arginine 113, and arginine 146 contribute to the substrate site; these read DLN and HLGR. Residues lysine 197, glutamate 314, and 340 to 343 contribute to the ATP site; that span reads GGDT.

The protein belongs to the phosphoglycerate kinase family. As to quaternary structure, monomer.

The protein resides in the cytoplasm. The enzyme catalyses (2R)-3-phosphoglycerate + ATP = (2R)-3-phospho-glyceroyl phosphate + ADP. It functions in the pathway carbohydrate degradation; glycolysis; pyruvate from D-glyceraldehyde 3-phosphate: step 2/5. This chain is Phosphoglycerate kinase, found in Pseudomonas fluorescens (strain Pf0-1).